The primary structure comprises 209 residues: Cilia- and flagella-associated protein 418 (209 aa).

The required for interaction with FAM161A stretch occupies residues 1–76 (MAKDLDELLD…LINEIFEEPD (76 aa)). The tract at residues 24–58 (LDLGERPKGDGGGGSHSGDRNGAQEKETLRSTETF) is disordered. Positions 40–58 (SGDRNGAQEKETLRSTETF) are enriched in basic and acidic residues.

Interacts (via N-terminus) with FAM161A (via central region); the interaction is direct. As to expression, expressed in multiple tissues, including the brain, kidney, lung, spleen, heart, trachea and testis. Expressed in the retina (at protein level).

It localises to the cytoplasm. The protein resides in the photoreceptor inner segment. Functionally, may be involved in photoreceptor outer segment disk morphogenesis. This chain is Cilia- and flagella-associated protein 418, found in Mus musculus (Mouse).